Here is a 221-residue protein sequence, read N- to C-terminus: Probable nicotinate-nucleotide adenylyltransferase (221 aa).

It belongs to the NadD family.

It carries out the reaction nicotinate beta-D-ribonucleotide + ATP + H(+) = deamido-NAD(+) + diphosphate. Its pathway is cofactor biosynthesis; NAD(+) biosynthesis; deamido-NAD(+) from nicotinate D-ribonucleotide: step 1/1. In terms of biological role, catalyzes the reversible adenylation of nicotinate mononucleotide (NaMN) to nicotinic acid adenine dinucleotide (NaAD). The sequence is that of Probable nicotinate-nucleotide adenylyltransferase from Marinomonas sp. (strain MWYL1).